Reading from the N-terminus, the 367-residue chain is Gelsolin-like protein 1 (367 aa).

The interval 1–185 (MATGLIKAKE…GQKQQIYVHE (185 aa)) is actin binding. 2 Gelsolin-like repeats span residues 56-141 (NFKV…ELFR) and 179-225 (QQIY…KAMQ). Residues 106–109 (DEYG) form an actin-actin interfilament contact point region. The tract at residues 186–295 (VPLVKERLDH…LKTTEVKRGA (110 aa)) is actin binding, Actin-severing. The segment at 235–257 (PKAEAETLEDESTPESHKFYTSL) is disordered. Residues 287 to 322 (KTTEVKRGAVNSKDFSSNDVFILDTGDQCFVWVGKG) form a Gelsolin-like 3 repeat. The tract at residues 296–366 (VNSKDFSSND…LCKAFNVAIA (71 aa)) is actin-severing, Ca-sensitive.

It belongs to the villin/gelsolin family. As to quaternary structure, interacts with actin monomers and filaments. In terms of tissue distribution, expressed in circular and longitudinal muscle, pseudohearts, pharynx and gizzard. Also expressed in male germ cells at the proximal pole of primary spermatocytes in 16 cell-stage morulae, and in the distal parts of the spermatocytes in 32 and 64 cell-stage morulae. In the spermatids of the 128 cell-stage morulae it is expressed at the proximal pole of the elongated nucleus and the distal pole near the base of the flagellae.

Its subcellular location is the cytoplasm. The protein resides in the cytoskeleton. Functionally, calcium-regulated protein that binds to the plus (or barbed) ends of actin monomers or filaments, preventing monomer exchange (end-blocking or capping). Can promote the assembly of monomers into filaments (nucleation) as well as sever existing filaments. This chain is Gelsolin-like protein 1, found in Lumbricus terrestris (Common earthworm).